Consider the following 238-residue polypeptide: D/L-lactic acid transporter (238 aa).

2 helical membrane-spanning segments follow: residues 2-22 (VHQL…GVGV) and 39-59 (IFAI…FGNV). The NPA 1 signature appears at 62-64 (NPA). 3 helical membrane-spanning segments follow: residues 80-100 (FIPY…IVWI), 135-155 (FFVE…ISEI), and 158-178 (PGIV…GLGG). Positions 185-187 (NLA) match the NPA 2 motif. The helical transmembrane segment at 211–231 (YGIIVPGIAPFVGAAIAAWFM) threads the bilayer.

The protein belongs to the MIP/aquaporin (TC 1.A.8) family.

Its subcellular location is the cell membrane. In terms of biological role, transporter that facilitates the transmembrane diffusion of D/L-lactic acid. Is involved in the cellular racemization of lactate and lactate metabolism. The transported molecule is indeed lactic acid and not the lactate anion, in agreement with the assumption that, with very few exceptions, MIPs (major intrinsic proteins) only facilitate the transport of uncharged solutes. Also facilitates urea and H(2)O(2) diffusion across membranes, but is not permeable to water, glycerol and dihydroxyacetone. This chain is D/L-lactic acid transporter, found in Lactiplantibacillus plantarum (strain ATCC BAA-793 / NCIMB 8826 / WCFS1) (Lactobacillus plantarum).